We begin with the raw amino-acid sequence, 595 residues long: NADH-quinone oxidoreductase subunit C/D (595 aa).

The segment at 1–185 is NADH dehydrogenase I subunit C; that stretch reads MTDLTAQAAC…DPFELTKAKQ (185 aa). Positions 209–595 are NADH dehydrogenase I subunit D; the sequence is DFMFLNLGPN…IDFVMSDVDR (387 aa).

It in the N-terminal section; belongs to the complex I 30 kDa subunit family. This sequence in the C-terminal section; belongs to the complex I 49 kDa subunit family. In terms of assembly, NDH-1 is composed of 13 different subunits. Subunits NuoB, CD, E, F, and G constitute the peripheral sector of the complex.

It is found in the cell inner membrane. It catalyses the reaction a quinone + NADH + 5 H(+)(in) = a quinol + NAD(+) + 4 H(+)(out). In terms of biological role, NDH-1 shuttles electrons from NADH, via FMN and iron-sulfur (Fe-S) centers, to quinones in the respiratory chain. The immediate electron acceptor for the enzyme in this species is believed to be ubiquinone. Couples the redox reaction to proton translocation (for every two electrons transferred, four hydrogen ions are translocated across the cytoplasmic membrane), and thus conserves the redox energy in a proton gradient. The protein is NADH-quinone oxidoreductase subunit C/D of Enterobacter sp. (strain 638).